A 224-amino-acid polypeptide reads, in one-letter code: Cytosolic-abundant heat soluble protein 77580 (224 aa).

Low complexity predominate over residues 1-13 (MSNYQQESSYQYS). Residues 1 to 38 (MSNYQQESSYQYSDRSNNGQQQEQQEKKEVEHSSYTHT) form a disordered region. Over residues 24–38 (QQEKKEVEHSSYTHT) the composition is skewed to basic and acidic residues. The stretch at 83-191 (VIDTEAETEE…KRVLERSKFH (109 aa)) forms a coiled coil. CAHS motif regions lie at residues 122-140 (YRKQ…LEKQ) and 159-177 (QKRQ…LERE). Residues 200–215 (AAAGSTHSGSSSVAVS) show a composition bias toward low complexity. The tract at residues 200-224 (AAAGSTHSGSSSVAVSESEKFQTNN) is disordered.

It belongs to the Cytosolic-abundant heat soluble protein (CAHS) family.

Its subcellular location is the cytoplasm. Its function is as follows. CAHS proteins are cytosolic heat soluble proteins that seem to contribute to the anhydrobiosis in tardigrades, but their specific mechanisms are yet to be identified. It is possible that protection during anhydrobiosis might occur via the stabilization of vitrifying small molecules such as sugars, but not via the direct glass transition of CAHS proteins themselves. This is Cytosolic-abundant heat soluble protein 77580 from Hypsibius exemplaris (Freshwater tardigrade).